The primary structure comprises 355 residues: Serum paraoxonase/arylesterase 1 (355 aa).

C42 and C353 are joined by a disulfide. 2 residues coordinate Ca(2+): E53 and D54. The active-site Proton acceptor is H115. Ca(2+) is bound by residues I117, N168, D169, and N224. N253 carries N-linked (GlcNAc...) asparagine glycosylation. Positions 269 and 270 each coordinate Ca(2+). N270 and N324 each carry an N-linked (GlcNAc...) asparagine glycan.

The protein belongs to the paraoxonase family. Homodimer. Interacts with CLU. Requires Ca(2+) as cofactor. Post-translationally, the signal sequence is not cleaved. As to expression, plasma, liver, kidney, heart, brain, small intestine and lung. In the plasma, associated with HDL.

The protein localises to the secreted. It is found in the extracellular space. It carries out the reaction a phenyl acetate + H2O = a phenol + acetate + H(+). It catalyses the reaction An aryl dialkyl phosphate + H2O = dialkyl phosphate + an aryl alcohol.. The catalysed reaction is an N-acyl-L-homoserine lactone + H2O = an N-acyl-L-homoserine + H(+). Functionally, hydrolyzes the toxic metabolites of a variety of organophosphorus insecticides. Capable of hydrolyzing a broad spectrum of organophosphate substrates and lactones, and a number of aromatic carboxylic acid esters. Mediates an enzymatic protection of low density lipoproteins against oxidative modification. The chain is Serum paraoxonase/arylesterase 1 (Pon1) from Mus musculus (Mouse).